Here is a 55-residue protein sequence, read N- to C-terminus: Large ribosomal subunit protein bL33 (55 aa).

This sequence belongs to the bacterial ribosomal protein bL33 family.

This chain is Large ribosomal subunit protein bL33, found in Renibacterium salmoninarum (strain ATCC 33209 / DSM 20767 / JCM 11484 / NBRC 15589 / NCIMB 2235).